The primary structure comprises 1641 residues: Alpha-2-macroglobulin (1641 aa).

An N-terminal signal peptide occupies residues 1–31; that stretch reads MRDRVAMMLRPLVRGWIPRAVLLLTVAFSFG. The N-palmitoyl cysteine moiety is linked to residue C32. C32 carries the S-diacylglycerol cysteine lipid modification. The isoglutamyl cysteine thioester (Cys-Gln) cross-link spans 1166–1169; that stretch reads CAEQ.

It belongs to the protease inhibitor I39 (alpha-2-macroglobulin) family. Bacterial alpha-2-macroglobulin subfamily.

The protein localises to the cell membrane. Its function is as follows. Protects the bacterial cell from host peptidases. In Xylella fastidiosa (strain 9a5c), this protein is Alpha-2-macroglobulin.